Here is a 350-residue protein sequence, read N- to C-terminus: Hydroxymethylglutaryl-CoA synthase (350 aa).

D30 contributes to the (3S)-3-hydroxy-3-methylglutaryl-CoA binding site. E82 serves as the catalytic Proton donor/acceptor. Residues C114, S155, T203, and H236 each contribute to the (3S)-3-hydroxy-3-methylglutaryl-CoA site. C114 acts as the Acyl-thioester intermediate in catalysis. Catalysis depends on H236, which acts as the Proton donor/acceptor. Residue R241 coordinates CoA. (3S)-3-hydroxy-3-methylglutaryl-CoA is bound by residues R245, N268, and S298.

Belongs to the thiolase-like superfamily. Archaeal HMG-CoA synthase family. As to quaternary structure, interacts with acetoacetyl-CoA thiolase that catalyzes the precedent step in the pathway and with a DUF35 protein. The acetoacetyl-CoA thiolase/HMG-CoA synthase complex channels the intermediate via a fused CoA-binding site, which allows for efficient coupling of the endergonic thiolase reaction with the exergonic HMGCS reaction.

The enzyme catalyses acetoacetyl-CoA + acetyl-CoA + H2O = (3S)-3-hydroxy-3-methylglutaryl-CoA + CoA + H(+). The protein operates within metabolic intermediate biosynthesis; (R)-mevalonate biosynthesis; (R)-mevalonate from acetyl-CoA: step 2/3. Its function is as follows. Catalyzes the condensation of acetyl-CoA with acetoacetyl-CoA to form 3-hydroxy-3-methylglutaryl-CoA (HMG-CoA). Functions in the mevalonate (MVA) pathway leading to isopentenyl diphosphate (IPP), a key precursor for the biosynthesis of isoprenoid compounds that are building blocks of archaeal membrane lipids. In Pyrobaculum aerophilum (strain ATCC 51768 / DSM 7523 / JCM 9630 / CIP 104966 / NBRC 100827 / IM2), this protein is Hydroxymethylglutaryl-CoA synthase.